The primary structure comprises 257 residues: 3-methyl-2-oxobutanoate hydroxymethyltransferase (257 aa).

2 residues coordinate Mg(2+): Asp-42 and Asp-86. 3-methyl-2-oxobutanoate is bound by residues 42-43 (DS), Asp-86, and Lys-116. Position 118 (Glu-118) interacts with Mg(2+). Residue Glu-185 is the Proton acceptor of the active site.

Belongs to the PanB family. In terms of assembly, homodecamer; pentamer of dimers. It depends on Mg(2+) as a cofactor.

It is found in the cytoplasm. It catalyses the reaction 3-methyl-2-oxobutanoate + (6R)-5,10-methylene-5,6,7,8-tetrahydrofolate + H2O = 2-dehydropantoate + (6S)-5,6,7,8-tetrahydrofolate. It functions in the pathway cofactor biosynthesis; (R)-pantothenate biosynthesis; (R)-pantoate from 3-methyl-2-oxobutanoate: step 1/2. Catalyzes the reversible reaction in which hydroxymethyl group from 5,10-methylenetetrahydrofolate is transferred onto alpha-ketoisovalerate to form ketopantoate. The chain is 3-methyl-2-oxobutanoate hydroxymethyltransferase from Prochlorococcus marinus (strain MIT 9515).